Reading from the N-terminus, the 257-residue chain is Adenylate kinase (257 aa).

Residue 52-57 (GAGKGT) participates in ATP binding. The segment at 72–101 (ATGDMLRSQVAKKTELGKEAKKIMDQGGLV) is NMP. Residues Thr-73, Arg-78, 99 to 101 (GLV), 128 to 131 (GFPR), and Gln-135 each bind AMP. Positions 169–206 (GRLVHPASGRSYHKIFNPPKNEMLDDITGEPLIQRSDD) are LID. Residues Arg-170 and 179-180 (SY) contribute to the ATP site. 2 residues coordinate AMP: Arg-203 and Arg-214. Residue Gln-242 coordinates ATP.

The protein belongs to the adenylate kinase family. AK2 subfamily. Monomer.

It localises to the cytoplasm. The protein resides in the cytosol. The protein localises to the mitochondrion intermembrane space. The catalysed reaction is AMP + ATP = 2 ADP. In terms of biological role, catalyzes the reversible transfer of the terminal phosphate group between ATP and AMP. Plays an important role in cellular energy homeostasis and in adenine nucleotide metabolism. Adenylate kinase activity is critical for regulation of the phosphate utilization and the AMP de novo biosynthesis pathways. This Aspergillus clavatus (strain ATCC 1007 / CBS 513.65 / DSM 816 / NCTC 3887 / NRRL 1 / QM 1276 / 107) protein is Adenylate kinase (adk1).